Here is a 180-residue protein sequence, read N- to C-terminus: Protein GrpE (180 aa).

The segment at 1 to 21 is disordered; sequence MSEEVKEQNLPEVEPVQEAAS.

This sequence belongs to the GrpE family. Homodimer.

It is found in the cytoplasm. Participates actively in the response to hyperosmotic and heat shock by preventing the aggregation of stress-denatured proteins, in association with DnaK and GrpE. It is the nucleotide exchange factor for DnaK and may function as a thermosensor. Unfolded proteins bind initially to DnaJ; upon interaction with the DnaJ-bound protein, DnaK hydrolyzes its bound ATP, resulting in the formation of a stable complex. GrpE releases ADP from DnaK; ATP binding to DnaK triggers the release of the substrate protein, thus completing the reaction cycle. Several rounds of ATP-dependent interactions between DnaJ, DnaK and GrpE are required for fully efficient folding. The sequence is that of Protein GrpE from Campylobacter concisus (strain 13826).